Consider the following 319-residue polypeptide: MSLNFLDFEKPIVELETKIQALRDVSRHSTSASVDLDKELEQLEKKSLELKKKIFSDLGAWQVAQLARHPQRPYTLDYLKHIFTEFDELAGDRAYADDKAIVGGIARLEGRSVMVIGHQKGRETREKVKRNFGMPKPEGYRKALRLMEMAERFNMPIITFIDTAGAYPGVGAEERGQSEAIAKNLKVMSGLKVPVICNVVGEGGSGGALAIGVGDYVNMLQYSTYSVISPEGCASILWRDSDKAPQAAEAMGLIAPRLKELELIDEIIEEPLGGAHRDHKQTAENVKATLLRQLADLDALDHENLLERRYQRLMNYGYC.

The region spanning 35 to 296 is the CoA carboxyltransferase C-terminal domain; that stretch reads DLDKELEQLE…KATLLRQLAD (262 aa).

It belongs to the AccA family. As to quaternary structure, acetyl-CoA carboxylase is a heterohexamer composed of biotin carboxyl carrier protein (AccB), biotin carboxylase (AccC) and two subunits each of ACCase subunit alpha (AccA) and ACCase subunit beta (AccD).

It localises to the cytoplasm. The catalysed reaction is N(6)-carboxybiotinyl-L-lysyl-[protein] + acetyl-CoA = N(6)-biotinyl-L-lysyl-[protein] + malonyl-CoA. It functions in the pathway lipid metabolism; malonyl-CoA biosynthesis; malonyl-CoA from acetyl-CoA: step 1/1. In terms of biological role, component of the acetyl coenzyme A carboxylase (ACC) complex. First, biotin carboxylase catalyzes the carboxylation of biotin on its carrier protein (BCCP) and then the CO(2) group is transferred by the carboxyltransferase to acetyl-CoA to form malonyl-CoA. This is Acetyl-coenzyme A carboxylase carboxyl transferase subunit alpha from Vibrio cholerae serotype O1 (strain ATCC 39541 / Classical Ogawa 395 / O395).